A 323-amino-acid chain; its full sequence is MKPENKIPVLTRLSDEMKAVVNFQQPGLPPWPADGDIETQRQYYLLERRFWNADAPSMTTRTCAVPTPYGDVTTRLYSPQPTSQATLYYLHGGGFILGNLDTHDRIMRLLARYTGCTVIGIDYSLSPQARYPQAIEETVAVCSYFSQHADEYSLNVEKIGFAGDSAGAMLALASALWLRDKHIRCGNVIAILLWYGLYGLQDSVSRRLFGGAWDGLTREDLDMYEKAYLRNDEDRESPWYCLFNNDLTRDVPPCFIASAEFDPLIDDSRLLHQTLQAHQQPCEYKMYPGTLHAFLHYSRMMTIADDALQDGARFFMARMKTPR.

Positions 91–93 match the Involved in the stabilization of the negatively charged intermediate by the formation of the oxyanion hole motif; the sequence is HGG. Residues Ser-165, Asp-262, and His-292 contribute to the active site.

Belongs to the 'GDXG' lipolytic enzyme family. In terms of assembly, homodimer. Interacts with MalT and MelA.

The protein localises to the cytoplasm. Functionally, displays esterase activity towards short chain fatty esters (acyl chain length of up to 8 carbons). Able to hydrolyze triacetylglycerol (triacetin) and tributyrylglycerol (tributyrin), but not trioleylglycerol (triolein) or cholesterol oleate. Negatively regulates MalT activity by antagonizing maltotriose binding. Inhibits MelA galactosidase activity. The chain is Acetyl esterase from Salmonella paratyphi A (strain ATCC 9150 / SARB42).